The primary structure comprises 292 residues: Imipenem-hydrolyzing beta-lactamase (292 aa).

Positions M1–A27 are cleaved as a signal peptide. An intrachain disulfide couples C70 to C240. The active-site Acyl-ester intermediate is the S71. K236–G238 contributes to the substrate binding site.

The protein belongs to the class-A beta-lactamase family.

The catalysed reaction is a beta-lactam + H2O = a substituted beta-amino acid. Its function is as follows. Hydrolyzes carbapenems such as imipenem, which are extended-spectrum beta-lactam antibiotics. The sequence is that of Imipenem-hydrolyzing beta-lactamase (nmcA) from Enterobacter cloacae.